We begin with the raw amino-acid sequence, 276 residues long: Rhomboid protease GlpG (276 aa).

6 consecutive transmembrane segments (helical) span residues 94 to 114 (GPVT…MQIL), 142 to 162 (ALMH…WYLG), 169 to 189 (LGSG…GYVQ), 192 to 212 (FSGP…GYVW), 229 to 249 (LIIF…GMSM), and 250 to 270 (ANGA…VDSL). The active-site Nucleophile is S201. The active site involves H254.

The protein belongs to the peptidase S54 family.

Its subcellular location is the cell inner membrane. It catalyses the reaction Cleaves type-1 transmembrane domains using a catalytic dyad composed of serine and histidine that are contributed by different transmembrane domains.. Rhomboid-type serine protease that catalyzes intramembrane proteolysis. The protein is Rhomboid protease GlpG of Escherichia coli O7:K1 (strain IAI39 / ExPEC).